We begin with the raw amino-acid sequence, 112 residues long: Large ribosomal subunit protein mL53 (112 aa).

This sequence belongs to the mitochondrion-specific ribosomal protein mL53 family. In terms of assembly, component of the mitochondrial ribosome large subunit (39S) which comprises a 16S rRNA and about 50 distinct proteins.

It localises to the mitochondrion. This is Large ribosomal subunit protein mL53 (MRPL53) from Pongo abelii (Sumatran orangutan).